We begin with the raw amino-acid sequence, 393 residues long: MKSTGLLLGYFLMKVLVCDAEGEPGKSLDGAVTASGSNDSRDGENGLSETPHTEDRCRGYYDVMGQWDPPFVCRTGSYLYCCGTCGFRFCCEFKNSRLDQTTCKNYDTPPWSMTGRPPPKMMDQHDPTKDKTNLIVYIICGVVAIMALVGIFTKLGLEKAHRPHRENMSRALAQVMRQTAPGEHVEREESLAVHGQPYENLQARATGNNLQSAQMNSVGPSSSMMQAMTPYPALGQVPVAHPYEPSPAAKELNKYASLKAVAEKANENFYTNRRHLADLAAKGTLPMHSVSLEQEPTNPYSPELPCQKQNGHKSKSTKVHSSHPLAYGSNTIANPGRMSSWETTETLGRRHTYGPKKHSATMEQMNELTSAQSQHYLPPHPYFVTNSKTEVTV.

The signal sequence occupies residues 1–20 (MKSTGLLLGYFLMKVLVCDA). Residues 21–131 (EGEPGKSLDG…MDQHDPTKDK (111 aa)) lie on the Extracellular side of the membrane. Residues 28–52 (LDGAVTASGSNDSRDGENGLSETPH) are disordered. An N-linked (GlcNAc...) asparagine glycan is attached at Asn-38. Residues 132–152 (TNLIVYIICGVVAIMALVGIF) form a helical membrane-spanning segment. Over 153-393 (TKLGLEKAHR…VTNSKTEVTV (241 aa)) the chain is Cytoplasmic. Residues 307 to 340 (QKQNGHKSKSTKVHSSHPLAYGSNTIANPGRMSS) are disordered. Basic residues predominate over residues 310–321 (NGHKSKSTKVHS).

The protein belongs to the shisa family. SHISA9 subfamily. As to quaternary structure, component of some AMPA receptors (ionotropic glutamate receptors) complex.

The protein localises to the cell projection. It localises to the dendritic spine membrane. The protein resides in the synapse. Functionally, regulator of short-term neuronal synaptic plasticity in the dentate gyrus. Associates with AMPA receptors (ionotropic glutamate receptors) in synaptic spines and promotes AMPA receptor desensitization at excitatory synapses. This Danio rerio (Zebrafish) protein is Protein shisa-9B (shisa9b).